The chain runs to 352 residues: O(6)-methylguanine-induced apoptosis 2 (352 aa).

STPGR repeat units follow at residues 80 to 90, 124 to 139, 165 to 171, 205 to 235, 244 to 263, 286 to 295, and 325 to 335; these read NPGPGAYNVAR, PAPN…FSKK, PAPNQYS, GPSP…KTSR, NPGP…KKII, PGPGHYDIVD, and LPGPGAYHPEI.

It belongs to the STPG1 family.

The protein localises to the cytoplasm. It is found in the nucleus. Functionally, may positively contribute to the induction of apoptosis triggered by O(6)-methylguanine. In Xenopus laevis (African clawed frog), this protein is O(6)-methylguanine-induced apoptosis 2 (stpg1).